The primary structure comprises 100 residues: Defensin-B4 (100 aa).

Positions 1–22 (MRASLLLFILLVYLAHAPQAQG) are cleaved as a signal peptide. The propeptide occupies 23–26 (VFGP). Cystine bridges form between Cys29/Cys56, Cys36/Cys50, and Cys40/Cys57. The disordered stretch occupies residues 60-100 (STGTSSSQGSHEVPVINSEPALESKPEPQDTQEEEATMVSE). Over residues 89–100 (DTQEEEATMVSE) the composition is skewed to acidic residues.

The protein belongs to the beta-defensin family. Highly expressed in kidney, lowly expressed in spleen, and expressed at lower levels in lung.

The protein resides in the secreted. In terms of biological role, has antimicrobial activity. In Ornithorhynchus anatinus (Duckbill platypus), this protein is Defensin-B4.